The sequence spans 480 residues: Coronin-2B (480 aa).

WD repeat units follow at residues 85–125 (GHQG…LKRN), 135–177 (GHSR…KMID), 179–217 (HTDV…VLQE), 220–263 (CKNH…MPMI), and 265–308 (EEID…PYLS). A coiled-coil region spans residues 436–479 (NELLRMFFRQQDEIRRLKEELAQKDIRLRQLQLELKNLRNNPKN).

Belongs to the WD repeat coronin family. In terms of assembly, binds to F-actin and to vinculin.

The protein resides in the cytoplasm. It is found in the cytoskeleton. May play a role in the reorganization of neuronal actin structure. This Mus musculus (Mouse) protein is Coronin-2B (Coro2b).